The following is a 491-amino-acid chain: Anthranilate synthase component 1 (491 aa).

L-tryptophan is bound by residues serine 49 and 271–273 (PYL). 306-307 (GT) provides a ligand contact to chorismate. Glutamate 333 contributes to the Mg(2+) binding site. Chorismate-binding positions include tyrosine 421, arginine 441, 455 to 457 (GAG), and glycine 457. Residue glutamate 470 participates in Mg(2+) binding.

This sequence belongs to the anthranilate synthase component I family. As to quaternary structure, heterotetramer consisting of two non-identical subunits: a beta subunit (TrpG) and a large alpha subunit (TrpE). Mg(2+) serves as cofactor.

The catalysed reaction is chorismate + L-glutamine = anthranilate + pyruvate + L-glutamate + H(+). Its pathway is amino-acid biosynthesis; L-tryptophan biosynthesis; L-tryptophan from chorismate: step 1/5. Its activity is regulated as follows. Feedback inhibited by tryptophan. In terms of biological role, part of a heterotetrameric complex that catalyzes the two-step biosynthesis of anthranilate, an intermediate in the biosynthesis of L-tryptophan. In the first step, the glutamine-binding beta subunit (TrpG) of anthranilate synthase (AS) provides the glutamine amidotransferase activity which generates ammonia as a substrate that, along with chorismate, is used in the second step, catalyzed by the large alpha subunit of AS (TrpE) to produce anthranilate. In the absence of TrpG, TrpE can synthesize anthranilate directly from chorismate and high concentrations of ammonia. This Neisseria meningitidis serogroup A / serotype 4A (strain DSM 15465 / Z2491) protein is Anthranilate synthase component 1 (trpE).